Consider the following 102-residue polypeptide: Large ribosomal subunit protein bL21 (102 aa).

Belongs to the bacterial ribosomal protein bL21 family. In terms of assembly, part of the 50S ribosomal subunit. Contacts protein L20.

Its function is as follows. This protein binds to 23S rRNA in the presence of protein L20. The chain is Large ribosomal subunit protein bL21 from Staphylococcus aureus.